The primary structure comprises 64 residues: Large ribosomal subunit protein bL35 (64 aa).

Belongs to the bacterial ribosomal protein bL35 family.

The sequence is that of Large ribosomal subunit protein bL35 from Pseudomonas savastanoi pv. phaseolicola (strain 1448A / Race 6) (Pseudomonas syringae pv. phaseolicola (strain 1448A / Race 6)).